The sequence spans 71 residues: V-type proton ATPase subunit e (71 aa).

Topologically, residues 1–2 (MS) are lumenal. A helical transmembrane segment spans residues 3-23 (FFHVVFVAFVIAAIGAAGWFV). Residues 24 to 35 (TPKGKNQTLLRT) lie on the Cytoplasmic side of the membrane. A helical membrane pass occupies residues 36–56 (SLLLTLTCCYLMWAITYLCQL). The Lumenal segment spans residues 57–71 (HPLITPRRSDLRMEY).

This sequence belongs to the V-ATPase e1/e2 subunit family. In terms of assembly, V-ATPase is a heteromultimeric enzyme composed of a peripheral catalytic V1 complex (components A to H) attached to an integral membrane V0 proton pore complex (components: a, c, c', c'', d, e, f and VOA1).

The protein resides in the vacuole membrane. Functionally, subunit of the V0 complex of vacuolar(H+)-ATPase (V-ATPase), a multisubunit enzyme composed of a peripheral complex (V1) that hydrolyzes ATP and a membrane integral complex (V0) that translocates protons. V-ATPase is responsible for acidifying and maintaining the pH of intracellular compartments. This chain is V-type proton ATPase subunit e (VMA9), found in Cryptococcus neoformans var. neoformans serotype D (strain JEC21 / ATCC MYA-565) (Filobasidiella neoformans).